A 534-amino-acid polypeptide reads, in one-letter code: Prolyl 4-hydroxylase subunit alpha-1 (534 aa).

The first 17 residues, 1–17, serve as a signal peptide directing secretion; it reads MIWGVLMMGILLPQCSA. An N-linked (GlcNAc...) asparagine glycan is attached at N113. The TPR repeat unit spans residues 205-238; that stretch reads VSVLDYLSYAVYQQGDLDKALLLTKKLLELDPEH. N259 carries N-linked (GlcNAc...) asparagine glycosylation. In terms of domain architecture, Fe2OG dioxygenase spans 411–519; sequence TAEELQVANY…KWVSNKWLHE (109 aa). Fe cation-binding residues include H429, D431, and H500. K510 lines the 2-oxoglutarate pocket.

This sequence belongs to the P4HA family. Heterotetramer of two alpha-1 chains and two beta chains (P4HB)(the beta chain is the multi-functional PDI), where P4HB plays the role of a structural subunit; this tetramer catalyzes the formation of 4-hydroxyproline in collagen. Fe(2+) is required as a cofactor. It depends on L-ascorbate as a cofactor.

It is found in the endoplasmic reticulum lumen. It catalyses the reaction L-prolyl-[collagen] + 2-oxoglutarate + O2 = trans-4-hydroxy-L-prolyl-[collagen] + succinate + CO2. Its function is as follows. Catalyzes the post-translational formation of 4-hydroxyproline in -Xaa-Pro-Gly- sequences in collagens and other proteins. This chain is Prolyl 4-hydroxylase subunit alpha-1 (P4ha1), found in Rattus norvegicus (Rat).